A 108-amino-acid chain; its full sequence is Tetrahydromethanopterin S-methyltransferase subunit B (108 aa).

The helical transmembrane segment at 79 to 99 (GMFFGFWVTMAILVLVTILAV) threads the bilayer.

Belongs to the MtrB family. In terms of assembly, the complex is composed of 8 subunits; MtrA, MtrB, MtrC, MtrD, MtrE, MtrF, MtrG and MtrH.

The protein resides in the cell membrane. It carries out the reaction 5-methyl-5,6,7,8-tetrahydromethanopterin + coenzyme M + 2 Na(+)(in) = 5,6,7,8-tetrahydromethanopterin + methyl-coenzyme M + 2 Na(+)(out). It participates in one-carbon metabolism; methanogenesis from CO(2); methyl-coenzyme M from 5,10-methylene-5,6,7,8-tetrahydromethanopterin: step 2/2. Part of a complex that catalyzes the formation of methyl-coenzyme M and tetrahydromethanopterin from coenzyme M and methyl-tetrahydromethanopterin. This is an energy-conserving, sodium-ion translocating step. This is Tetrahydromethanopterin S-methyltransferase subunit B from Methanococcus maripaludis (strain C5 / ATCC BAA-1333).